The primary structure comprises 860 residues: Ubiquitin fusion degradation protein 3 homolog (860 aa).

WD repeat units follow at residues 27–65 (AHKS…YTKT), 71–112 (PKGI…PYAI), 115–154 (EHKQ…SSSF), 163–203 (GHTL…SVFK), 204–242 (GHTD…ILRK), and 244–283 (ATQA…DGNL). The 101-residue stretch at 397–497 (PIHYLEEITR…DKLSKGAASA (101 aa)) folds into the PFU domain. A disordered region spans residues 494–585 (AASAQSGYED…LPQNKKKPRG (92 aa)). Residues 586–856 (PLVPVPDFYI…KNIARDIVEM (271 aa)) enclose the PUL domain.

This sequence belongs to the WD repeat PLAP family. As to quaternary structure, interacts with cdc-48.1. As to expression, expressed in intestine (at protein level).

It localises to the cytoplasm. Functionally, plays a role in protein ubiquitination, sorting and degradation through its association with cdc-48.1 and/or cdc-48.2. In Caenorhabditis elegans, this protein is Ubiquitin fusion degradation protein 3 homolog.